We begin with the raw amino-acid sequence, 125 residues long: NADH-ubiquinone oxidoreductase chain 1 (125 aa).

The next 3 membrane-spanning stretches (helical) occupy residues 5–25 (IFAFFELITFLVPVLLAVAFL), 74–94 (YLFFASPVLFLTLALLLWNFM), and 105–125 (LSLLLVLGLSSLSVYAILGSG).

This sequence belongs to the complex I subunit 1 family.

The protein localises to the mitochondrion inner membrane. It catalyses the reaction a ubiquinone + NADH + 5 H(+)(in) = a ubiquinol + NAD(+) + 4 H(+)(out). Its function is as follows. Core subunit of the mitochondrial membrane respiratory chain NADH dehydrogenase (Complex I) that is believed to belong to the minimal assembly required for catalysis. Complex I functions in the transfer of electrons from NADH to the respiratory chain. The immediate electron acceptor for the enzyme is believed to be ubiquinone. This Arbacia lixula (Black urchin) protein is NADH-ubiquinone oxidoreductase chain 1 (ND1).